Here is a 255-residue protein sequence, read N- to C-terminus: Ribonuclease HII (255 aa).

The region spanning 70 to 255 (DLVAGIDEVG…FEPVPEFLIK (186 aa)) is the RNase H type-2 domain. A divalent metal cation is bound by residues Asp76, Glu77, and Asp168.

It belongs to the RNase HII family. Mn(2+) serves as cofactor. Mg(2+) is required as a cofactor.

It localises to the cytoplasm. It catalyses the reaction Endonucleolytic cleavage to 5'-phosphomonoester.. Functionally, endonuclease that specifically degrades the RNA of RNA-DNA hybrids. In Pediococcus pentosaceus (strain ATCC 25745 / CCUG 21536 / LMG 10740 / 183-1w), this protein is Ribonuclease HII.